Here is a 461-residue protein sequence, read N- to C-terminus: MSTICAISTAPGVGGIAVIRVSGPDTFKICDRIFRPKKAGKSLSTQKAYTLTYGSIVGNNDETIDEVIAAVFRAPHSFTGEDTVEITCHGSTYIQQQILQSLISSGCRIAQPGEYTQRAFMNGKMDLSQAEAVADLIASTSAGQHRLALSQMRGGFSRELAELRNQLLHFTSLMELELDFSDHEELEFADRSELRTLADHIEQVISKLAQSFSVGNAIKNGIPVAIIGETNAGKSTLLNALLNEDKAIVSDIHGTTRDVIEDTININGQLFRFIDTAGIRETSDAIEALGIERSFKALDQAQIVILMYDLTRDLKDFEAFYQEIAPRLTNKSVILAMNKCDVLPTSSLPTFSFPTEGWHQIAISAKSKLHIAELQQLLTEVSSIPTLHQSDIIVTNVRHFEALTHALEAIHRVQEGLNSSLSGDFISQDLRECIFHLSDIVGEVTTDQVLGNIFRHFCIGK.

(6S)-5-formyl-5,6,7,8-tetrahydrofolate contacts are provided by R20, E85, and K124. One can recognise a TrmE-type G domain in the interval 221–383 (GIPVAIIGET…LQQLLTEVSS (163 aa)). N231 is a binding site for K(+). GTP-binding positions include 231–236 (NAGKST), 250–256 (SDIHGTT), and 275–278 (DTAG). S235 provides a ligand contact to Mg(2+). K(+) contacts are provided by S250, I252, and T255. Residue T256 coordinates Mg(2+). Residue K461 coordinates (6S)-5-formyl-5,6,7,8-tetrahydrofolate.

Belongs to the TRAFAC class TrmE-Era-EngA-EngB-Septin-like GTPase superfamily. TrmE GTPase family. Homodimer. Heterotetramer of two MnmE and two MnmG subunits. Requires K(+) as cofactor.

It is found in the cytoplasm. Functionally, exhibits a very high intrinsic GTPase hydrolysis rate. Involved in the addition of a carboxymethylaminomethyl (cmnm) group at the wobble position (U34) of certain tRNAs, forming tRNA-cmnm(5)s(2)U34. This Parabacteroides distasonis (strain ATCC 8503 / DSM 20701 / CIP 104284 / JCM 5825 / NCTC 11152) protein is tRNA modification GTPase MnmE.